The sequence spans 150 residues: Phosphopantetheine adenylyltransferase (150 aa).

Substrate is bound at residue threonine 15. ATP-binding positions include 15 to 16 (TF) and histidine 23. 2 residues coordinate substrate: isoleucine 80 and arginine 94. Residues 95–97 (GIR), glutamate 105, and 130–136 (LENISSR) contribute to the ATP site.

This sequence belongs to the bacterial CoaD family. Homohexamer. Requires Mg(2+) as cofactor.

It localises to the cytoplasm. The catalysed reaction is (R)-4'-phosphopantetheine + ATP + H(+) = 3'-dephospho-CoA + diphosphate. It participates in cofactor biosynthesis; coenzyme A biosynthesis; CoA from (R)-pantothenate: step 4/5. Reversibly transfers an adenylyl group from ATP to 4'-phosphopantetheine, yielding dephospho-CoA (dPCoA) and pyrophosphate. The sequence is that of Phosphopantetheine adenylyltransferase from Malacoplasma penetrans (strain HF-2) (Mycoplasma penetrans).